A 361-amino-acid chain; its full sequence is S-adenosylmethionine:tRNA ribosyltransferase-isomerase (361 aa).

It belongs to the QueA family. As to quaternary structure, monomer.

Its subcellular location is the cytoplasm. It catalyses the reaction 7-aminomethyl-7-carbaguanosine(34) in tRNA + S-adenosyl-L-methionine = epoxyqueuosine(34) in tRNA + adenine + L-methionine + 2 H(+). It participates in tRNA modification; tRNA-queuosine biosynthesis. Functionally, transfers and isomerizes the ribose moiety from AdoMet to the 7-aminomethyl group of 7-deazaguanine (preQ1-tRNA) to give epoxyqueuosine (oQ-tRNA). This Afipia carboxidovorans (strain ATCC 49405 / DSM 1227 / KCTC 32145 / OM5) (Oligotropha carboxidovorans) protein is S-adenosylmethionine:tRNA ribosyltransferase-isomerase.